The following is a 539-amino-acid chain: MAKDLKFSEDARQAMLRGVDKLANAVKVTIGPKGRNVVLDKDYTTPLITNDGVTIAKEIELEDPYENMGAKLVQEVANKTNEIAGDGTTTATVLAQSMIQEGLKNVTSGANPVGLRQGIDKAVQVAIEALHEISQKVENKNEIAQVGAISAADEEIGRYISEAMDKVGNDGVITIEESNGFNTELEVAEGMQFDRGYQSPYMVTDSDKMIAELERPYILVTDKKISSFQDILPLLEQVVQASRPILIVADEVEGDALTNIVLNRMRGTFTAVAVKAPGFGDRRKAMLEDLAILTGAQVITDDLGLELKDASLDMLGTANKVEVTKDHTTVVDGNGDENNIDARVGQIKAQIEETDSECDKEKLQERVAKLAGGVAVIKVGAASDTELKERKLRIEDALNSTRAAVEEGIVAGGGTALVNIYQKVSEIKAEGDVETGVNIVLKALQAPVRQIAENAGLEGSIIVERLKHAEAGVGFNAATNEWVNMLEEGIVDPTKVTRSALQHAASVAAMFLTTEAVVASIPEPENNEQPGMGGMPGMM.

Residues 29 to 32 (TIGP), 86 to 90 (DGTTT), G413, 476 to 478 (NAA), and D492 each bind ATP.

It belongs to the chaperonin (HSP60) family. Forms a cylinder of 14 subunits composed of two heptameric rings stacked back-to-back. Interacts with the co-chaperonin GroES.

It is found in the cytoplasm. The catalysed reaction is ATP + H2O + a folded polypeptide = ADP + phosphate + an unfolded polypeptide.. In terms of biological role, together with its co-chaperonin GroES, plays an essential role in assisting protein folding. The GroEL-GroES system forms a nano-cage that allows encapsulation of the non-native substrate proteins and provides a physical environment optimized to promote and accelerate protein folding. This chain is Chaperonin GroEL, found in Staphylococcus epidermidis.